The primary structure comprises 166 residues: Cold-inducible RNA-binding protein (166 aa).

In terms of domain architecture, RRM spans 6-84 (GKLFVGGLNF…RQIRVDQAGK (79 aa)). The tract at residues 68-166 (NGKSVDGRQI…DSYDSYTTQE (99 aa)) is disordered. Gly residues predominate over residues 93-120 (YRGGSSGGRGFFRGGRGRGGGGDRGYGG). The segment covering 121–166 (SSRFENRSGGYQSSGSRDYYGRSHGSYGDRSGGSYRDSYDSYTTQE) has biased composition (low complexity).

In terms of assembly, interacts with prmt1. Interacts with elavl1/elrA (via RRM3). Associates with ribosomes. In terms of processing, methylated on arginine residues within RGG motifs. Methylation by prmt1 promotes cytoplasmic accumulation.

It is found in the nucleus. The protein resides in the nucleoplasm. Its subcellular location is the cytoplasm. In terms of biological role, cold-inducible mRNA binding protein. Acts cooperatively with elavl1/elrA to stabilize AU-rich element (ARE)-containing mRNAs by binding to themm and inhibiting their deadenylation. Essential for embryonic gastrulation and neural development, acting to maintain the expression of a set of adhesion molecules, and cell movement during embryogenesis. Required for pronephros development. The polypeptide is Cold-inducible RNA-binding protein (Xenopus tropicalis (Western clawed frog)).